Here is a 308-residue protein sequence, read N- to C-terminus: Reaction center protein M chain (308 aa).

Helical transmembrane passes span 54–80 (GSLG…YQAG), 111–140 (KEGG…RAQA), and 143–168 (MGKH…RPIL). Residues histidine 183 and histidine 203 each coordinate (7R,8Z)-bacteriochlorophyll b. Residues 198-226 (FYNPFHGLSIAFLYGSALLFAMHGATILA) form a helical membrane-spanning segment. 2 residues coordinate Fe cation: histidine 220 and glutamate 235. Position 253 (tryptophan 253) interacts with a ubiquinone. The helical transmembrane segment at 260-286 (NATMEGIHRWAIWMAVLVTLTGGIGIL) threads the bilayer. A Fe cation-binding site is contributed by histidine 267.

The protein belongs to the reaction center PufL/M/PsbA/D family. As to quaternary structure, reaction center is composed of four bacteriochlorophylls, two bacteriopheophytins, two ubiquinones, one iron, and three highly hydrophobic polypeptide chains (designated L, M, and H).

Its subcellular location is the cellular chromatophore membrane. The reaction center is a membrane-bound complex that mediates the initial photochemical event in the electron transfer process of photosynthesis. The chain is Reaction center protein M chain (pufM) from Cereibacter sphaeroides (strain ATCC 17023 / DSM 158 / JCM 6121 / CCUG 31486 / LMG 2827 / NBRC 12203 / NCIMB 8253 / ATH 2.4.1.) (Rhodobacter sphaeroides).